The primary structure comprises 449 residues: Bifunctional protein GlmU (449 aa).

The pyrophosphorylase stretch occupies residues 1 to 226; the sequence is MNNIHAIILA…KFEVLGVNDK (226 aa). Residues 9-12, lysine 23, glutamine 73, 78-79, 100-102, glycine 137, glutamate 151, asparagine 166, and asparagine 224 contribute to the UDP-N-acetyl-alpha-D-glucosamine site; these read LAAG, GT, and YGD. Aspartate 102 serves as a coordination point for Mg(2+). Position 224 (asparagine 224) interacts with Mg(2+). The tract at residues 227–247 is linker; sequence VQLAELERLFQKDQAIQFMKQ. The interval 248 to 449 is N-acetyltransferase; that stretch reads GLGLKDPTRF…QKNLKYRSKK (202 aa). Residues arginine 330 and lysine 348 each coordinate UDP-N-acetyl-alpha-D-glucosamine. Histidine 360 serves as the catalytic Proton acceptor. UDP-N-acetyl-alpha-D-glucosamine-binding residues include tyrosine 363 and asparagine 374. Acetyl-CoA contacts are provided by residues alanine 377, 383–384, serine 402, alanine 420, and arginine 437; that span reads NY.

In the N-terminal section; belongs to the N-acetylglucosamine-1-phosphate uridyltransferase family. The protein in the C-terminal section; belongs to the transferase hexapeptide repeat family. Homotrimer. It depends on Mg(2+) as a cofactor.

The protein resides in the cytoplasm. It carries out the reaction alpha-D-glucosamine 1-phosphate + acetyl-CoA = N-acetyl-alpha-D-glucosamine 1-phosphate + CoA + H(+). The catalysed reaction is N-acetyl-alpha-D-glucosamine 1-phosphate + UTP + H(+) = UDP-N-acetyl-alpha-D-glucosamine + diphosphate. It functions in the pathway nucleotide-sugar biosynthesis; UDP-N-acetyl-alpha-D-glucosamine biosynthesis; N-acetyl-alpha-D-glucosamine 1-phosphate from alpha-D-glucosamine 6-phosphate (route II): step 2/2. The protein operates within nucleotide-sugar biosynthesis; UDP-N-acetyl-alpha-D-glucosamine biosynthesis; UDP-N-acetyl-alpha-D-glucosamine from N-acetyl-alpha-D-glucosamine 1-phosphate: step 1/1. Its pathway is bacterial outer membrane biogenesis; LPS lipid A biosynthesis. Its function is as follows. Catalyzes the last two sequential reactions in the de novo biosynthetic pathway for UDP-N-acetylglucosamine (UDP-GlcNAc). The C-terminal domain catalyzes the transfer of acetyl group from acetyl coenzyme A to glucosamine-1-phosphate (GlcN-1-P) to produce N-acetylglucosamine-1-phosphate (GlcNAc-1-P), which is converted into UDP-GlcNAc by the transfer of uridine 5-monophosphate (from uridine 5-triphosphate), a reaction catalyzed by the N-terminal domain. This is Bifunctional protein GlmU from Vesicomyosocius okutanii subsp. Calyptogena okutanii (strain HA).